The following is a 320-amino-acid chain: Acetaldehyde dehydrogenase 2 (320 aa).

The Acyl-thioester intermediate role is filled by Cys-129. NAD(+)-binding positions include 160-168 (SAGPGTRAN) and Asn-287.

It belongs to the acetaldehyde dehydrogenase family.

The enzyme catalyses acetaldehyde + NAD(+) + CoA = acetyl-CoA + NADH + H(+). The polypeptide is Acetaldehyde dehydrogenase 2 (Burkholderia cenocepacia (strain ATCC BAA-245 / DSM 16553 / LMG 16656 / NCTC 13227 / J2315 / CF5610) (Burkholderia cepacia (strain J2315))).